Here is a 464-residue protein sequence, read N- to C-terminus: Protein FAM90A15 (464 aa).

Disordered stretches follow at residues 1-42, 70-389, and 415-437; these read MMAR…DPRL, PATL…HDGA, and HSPEKPGAFLAQSPHVSEKSEAP. 2 stretches are compositionally biased toward basic and acidic residues: residues 74–89 and 97–114; these read GKKEGKENLKPWKPRV and NKDKGEKEERPRQQDPQR. The span at 180–197 shows a compositional bias: low complexity; that stretch reads LASLSPLRKASLSSSSSL.

This sequence belongs to the FAM90 family.

This is Protein FAM90A15 from Homo sapiens (Human).